A 1404-amino-acid polypeptide reads, in one-letter code: DNA-directed RNA polymerase subunit beta' (1404 aa).

Positions 60, 62, 75, and 78 each coordinate Zn(2+). The Mg(2+) site is built by Asp449, Asp451, and Asp453. 4 residues coordinate Zn(2+): Cys778, Cys852, Cys859, and Cys862. The disordered stretch occupies residues 1381-1404 (DRPLEEEEEEEIPQSIADDSDGDE). The segment covering 1384–1404 (LEEEEEEEIPQSIADDSDGDE) has biased composition (acidic residues).

Belongs to the RNA polymerase beta' chain family. In terms of assembly, the RNAP catalytic core consists of 2 alpha, 1 beta, 1 beta' and 1 omega subunit. When a sigma factor is associated with the core the holoenzyme is formed, which can initiate transcription. Mg(2+) is required as a cofactor. Zn(2+) serves as cofactor.

The enzyme catalyses RNA(n) + a ribonucleoside 5'-triphosphate = RNA(n+1) + diphosphate. DNA-dependent RNA polymerase catalyzes the transcription of DNA into RNA using the four ribonucleoside triphosphates as substrates. This Leptospira borgpetersenii serovar Hardjo-bovis (strain L550) protein is DNA-directed RNA polymerase subunit beta'.